A 622-amino-acid polypeptide reads, in one-letter code: Protein FAM234B (622 aa).

Positions 1-68 (MATVLSRALK…EPDSDAEVAE (68 aa)) are disordered. Ser-16 is modified (phosphoserine). At Thr-26 the chain carries Phosphothreonine. Residues Ser-30, Ser-33, and Ser-62 each carry the phosphoserine modification. A helical transmembrane segment spans residues 104–124 (TSVFLLTLGISMILVLLCAFL).

This sequence belongs to the FAM234 family.

The protein localises to the membrane. Its subcellular location is the golgi outpost. It is found in the cytoplasm. The protein resides in the cytoskeleton. It localises to the microtubule organizing center. In Homo sapiens (Human), this protein is Protein FAM234B.